Consider the following 477-residue polypeptide: Glycogen synthase (477 aa).

Lys-15 contributes to the ADP-alpha-D-glucose binding site.

This sequence belongs to the glycosyltransferase 1 family. Bacterial/plant glycogen synthase subfamily.

The catalysed reaction is [(1-&gt;4)-alpha-D-glucosyl](n) + ADP-alpha-D-glucose = [(1-&gt;4)-alpha-D-glucosyl](n+1) + ADP + H(+). The protein operates within glycan biosynthesis; glycogen biosynthesis. In terms of biological role, synthesizes alpha-1,4-glucan chains using ADP-glucose. The sequence is that of Glycogen synthase from Escherichia coli O139:H28 (strain E24377A / ETEC).